The primary structure comprises 557 residues: Aspartate--tRNA ligase (557 aa).

Glu-168 contacts L-aspartate. The tract at residues 192 to 195 (QIYK) is aspartate. Arg-214 serves as a coordination point for L-aspartate. Residues 214-216 (RDE) and Gln-223 each bind ATP. His-423 contacts L-aspartate. Glu-457 lines the ATP pocket. An L-aspartate-binding site is contributed by Arg-464. Residue 505 to 508 (GLDR) participates in ATP binding.

It belongs to the class-II aminoacyl-tRNA synthetase family. Type 1 subfamily. As to quaternary structure, homodimer.

It localises to the cytoplasm. It carries out the reaction tRNA(Asp) + L-aspartate + ATP = L-aspartyl-tRNA(Asp) + AMP + diphosphate. Functionally, catalyzes the attachment of L-aspartate to tRNA(Asp) in a two-step reaction: L-aspartate is first activated by ATP to form Asp-AMP and then transferred to the acceptor end of tRNA(Asp). The polypeptide is Aspartate--tRNA ligase (Mycoplasma pneumoniae (strain ATCC 29342 / M129 / Subtype 1) (Mycoplasmoides pneumoniae)).